The following is a 545-amino-acid chain: Carboxypeptidase Y homolog A (545 aa).

The signal sequence occupies residues 1–17 (MKSLALALLVGGAIAAG). A propeptide spanning residues 18 to 123 (PQQQVLQAPV…KLEAYDLRVK (106 aa)) is cleaved from the precursor. Intrachain disulfides connect cysteine 177-cysteine 416, cysteine 311-cysteine 325, cysteine 335-cysteine 358, cysteine 342-cysteine 351, and cysteine 380-cysteine 386. An N-linked (GlcNAc...) asparagine glycan is attached at asparagine 208. Serine 264 is a catalytic residue. Residue aspartate 455 is part of the active site. N-linked (GlcNAc...) asparagine glycosylation is found at asparagine 485, asparagine 491, and asparagine 506. Residue histidine 517 is part of the active site.

The protein belongs to the peptidase S10 family.

It localises to the vacuole. The enzyme catalyses Release of a C-terminal amino acid with broad specificity.. Vacuolar carboxypeptidase involved in degradation of small peptides. Digests preferentially peptides containing an aliphatic or hydrophobic residue in P1' position, as well as methionine, leucine or phenylalanine in P1 position of ester substrate. The polypeptide is Carboxypeptidase Y homolog A (CPYA) (Ajellomyces dermatitidis (strain ER-3 / ATCC MYA-2586) (Blastomyces dermatitidis)).